Reading from the N-terminus, the 343-residue chain is Olfactory receptor 1E3 (343 aa).

The Extracellular portion of the chain corresponds to Met-1–Tyr-28. Asn-5 is a glycosylation site (N-linked (GlcNAc...) asparagine). A helical transmembrane segment spans residues Ala-29–Ile-49. At Arg-50 to Tyr-107 the chain is on the cytoplasmic side. Residues Cys-97 and Cys-179 are joined by a disulfide bond. The helical transmembrane segment at Gly-108 to Phe-128 threads the bilayer. The Extracellular segment spans residues Pro-129 to Cys-141. The helical transmembrane segment at Leu-142–Leu-162 threads the bilayer. Residues Met-163–Asn-195 are Cytoplasmic-facing. Residues Gly-196–Met-216 form a helical membrane-spanning segment. The Extracellular segment spans residues Ser-217–Gly-242. A helical transmembrane segment spans residues Pro-243–Leu-263. At Thr-264–Asp-271 the chain is on the cytoplasmic side. The helical transmembrane segment at Thr-272 to Leu-292 threads the bilayer. Residues Arg-293–Asn-310 are Extracellular-facing. The chain crosses the membrane as a helical span at residues Phe-311 to Val-331. Topologically, residues Lys-332 to Ala-343 are cytoplasmic.

It belongs to the G-protein coupled receptor 1 family.

Its subcellular location is the cell membrane. In terms of biological role, odorant receptor. This chain is Olfactory receptor 1E3 (OR1E3), found in Homo sapiens (Human).